We begin with the raw amino-acid sequence, 261 residues long: MSFTVVIPARYASTRLPGKPLAMIAGKPMIQHVCERANESRASRVVVATDDARIEEACRGFGAEVIMTSPNHASGTDRLEEVARKLQLDPDHRVVNVQGDEPLIPPELINQVADNLEQYQEAAIATLCERIHDARQVFNPNVVKVVFDARGMAHYFSRAPIPWARDFWPAGAATQDVDLPDGIGYFRHIGIYGYRASVLSEFVTWLPAPTERVESLEQLRALYNGALIHVDVADRPPAPGVDTEEDLARLRALMEKGGARG.

The protein belongs to the KdsB family.

It localises to the cytoplasm. The enzyme catalyses 3-deoxy-alpha-D-manno-oct-2-ulosonate + CTP = CMP-3-deoxy-beta-D-manno-octulosonate + diphosphate. Its pathway is nucleotide-sugar biosynthesis; CMP-3-deoxy-D-manno-octulosonate biosynthesis; CMP-3-deoxy-D-manno-octulosonate from 3-deoxy-D-manno-octulosonate and CTP: step 1/1. The protein operates within bacterial outer membrane biogenesis; lipopolysaccharide biosynthesis. Functionally, activates KDO (a required 8-carbon sugar) for incorporation into bacterial lipopolysaccharide in Gram-negative bacteria. This chain is 3-deoxy-manno-octulosonate cytidylyltransferase, found in Marinobacter nauticus (strain ATCC 700491 / DSM 11845 / VT8) (Marinobacter aquaeolei).